Reading from the N-terminus, the 723-residue chain is PX domain-containing protein EREL1 (723 aa).

A compositionally biased stretch (basic residues) spans 1 to 12 (MMQRRSPPKHRH). The disordered stretch occupies residues 1–26 (MMQRRSPPKHRHDGTSPLPLGMDWSP). Residues 48–165 (YCVTIPSWIV…SFLELEAAAR (118 aa)) enclose the PX domain. Disordered stretches follow at residues 169-193 (QDVDQNASDSNNDRSSTSSSPMVHP) and 209-230 (YGSDTAYETSEVGSPSVGQDDI). Residues 172-193 (DQNASDSNNDRSSTSSSPMVHP) show a composition bias toward low complexity. Residues 209-225 (YGSDTAYETSEVGSPSV) show a composition bias toward polar residues. Coiled-coil stretches lie at residues 401 to 474 (NERL…LRQK) and 503 to 555 (KHVL…LEKE). The interval 698–723 (DVKTTEDVNEENSDEKDEASRETLKR) is disordered. Residues 704–714 (DVNEENSDEKD) show a composition bias toward acidic residues.

It is found in the cytoplasm. The protein resides in the cytosol. The protein localises to the endosome membrane. In terms of biological role, acts as an effector of RABF2A and RABF2B. Involved in vacuolar transport of storage proteins. Regulates membrane trafficking to protein storage vacuoles (PSVs). Binds specifically to phosphatidylinositol 3-monophosphate (PtdIns3P). This Arabidopsis thaliana (Mouse-ear cress) protein is PX domain-containing protein EREL1.